We begin with the raw amino-acid sequence, 632 residues long: MSASTSTSTAASQDACYISLLGLAEYFRTSQPPNIKKCIQCLQALFTFMPPSKVEARTHLQMGQILMAYTKNIDLARQHLEKAWSISEPLPNFDVKFDTASLLAQLHLQTDRNSHQAKAMLRRAVELSQNNVYWHCKLLLQLSQIHASDREYSLASELLAVGAESADEASATYLKVLFLLSRAMILMIERKTNDVLALLNSAGQIIDNNIPNPHQKEYLKVFFLVLQVCYYLALGQVKTVKPSLKQLQMSIQTIMAPNWPSDEAIFGANQLEMFVWLPKEQLYVLVYLVTVSHSMMAGYMDKAQKYTEKALTQIEKLKQQEDKPILSVFKVILLEHIVMCRMVMGNRELAIREIAAARDVCMAAPQRSLLRRHSAQLHCLIGLYSMSTNLFEHAERQFVVCVSETSERDLKLFANLNLAIIYLRTKRDTDLKQILDAVSTENTHTYSSQALMGGFYYVQGLHAFHKNSFHEAKRFLRETLKMANAEDLNRLTSCSLVLLSHVFLSIGNSKESMNMVTPAMQLASKIPDIHVQLWGSAILKDLHRMSKDVQHEKDAYANHVKYSENLIADQRKCVQSAHHELVNWFQGDPPVTSGPPAAPVLLMPESSVTASVPVIASTSAAMQPAGQYGQFY.

TPR repeat units follow at residues 453–486 (GGFY…ANAE) and 493–526 (SCSL…ASKI).

It belongs to the SCC4/mau-2 family. As to quaternary structure, interacts with Nipped-B to form the cohesin loading complex.

It is found in the nucleus. The protein resides in the nucleoplasm. Required for association of the cohesin complex with chromatin during interphase. Plays a role in sister chromatid cohesion and normal progression through prometaphase. This is MAU2 chromatid cohesion factor homolog from Drosophila erecta (Fruit fly).